The following is a 400-amino-acid chain: Acetate kinase (400 aa).

Residue asparagine 7 participates in Mg(2+) binding. Lysine 14 is an ATP binding site. Substrate is bound at residue arginine 91. Residue aspartate 148 is the Proton donor/acceptor of the active site. Residues 208 to 212 (HVGNG), 283 to 285 (DMR), and 331 to 335 (GVGEN) contribute to the ATP site. Glutamate 385 is a Mg(2+) binding site.

Belongs to the acetokinase family. Homodimer. Mg(2+) is required as a cofactor. The cofactor is Mn(2+).

It localises to the cytoplasm. It catalyses the reaction acetate + ATP = acetyl phosphate + ADP. It functions in the pathway metabolic intermediate biosynthesis; acetyl-CoA biosynthesis; acetyl-CoA from acetate: step 1/2. Catalyzes the formation of acetyl phosphate from acetate and ATP. Can also catalyze the reverse reaction. This is Acetate kinase from Parabacteroides distasonis (strain ATCC 8503 / DSM 20701 / CIP 104284 / JCM 5825 / NCTC 11152).